A 401-amino-acid chain; its full sequence is Coenzyme A biosynthesis bifunctional protein CoaBC (401 aa).

The phosphopantothenoylcysteine decarboxylase stretch occupies residues 1–190 (MQTLAGKKIL…FQPKPLQDKS (190 aa)). Cys159 acts as the Proton donor in catalysis. Residues 191–401 (ILITAGPTRE…LKQIQTLMGH (211 aa)) form a phosphopantothenate--cysteine ligase region. CTP-binding positions include Asp279, Lys289, 307-310 (PDIV), Phe326, Lys340, and Lys344.

In the N-terminal section; belongs to the HFCD (homo-oligomeric flavin containing Cys decarboxylase) superfamily. It in the C-terminal section; belongs to the PPC synthetase family. Mg(2+) is required as a cofactor. The cofactor is FMN.

The enzyme catalyses N-[(R)-4-phosphopantothenoyl]-L-cysteine + H(+) = (R)-4'-phosphopantetheine + CO2. It carries out the reaction (R)-4'-phosphopantothenate + L-cysteine + CTP = N-[(R)-4-phosphopantothenoyl]-L-cysteine + CMP + diphosphate + H(+). It participates in cofactor biosynthesis; coenzyme A biosynthesis; CoA from (R)-pantothenate: step 2/5. The protein operates within cofactor biosynthesis; coenzyme A biosynthesis; CoA from (R)-pantothenate: step 3/5. Catalyzes two sequential steps in the biosynthesis of coenzyme A. In the first step cysteine is conjugated to 4'-phosphopantothenate to form 4-phosphopantothenoylcysteine. In the second step the latter compound is decarboxylated to form 4'-phosphopantotheine. This is Coenzyme A biosynthesis bifunctional protein CoaBC from Vibrio vulnificus (strain YJ016).